We begin with the raw amino-acid sequence, 681 residues long: DNA-directed RNA polymerase subunit beta' (681 aa).

4 residues coordinate Zn(2+): Cys-69, Cys-71, Cys-87, and Cys-90. Mg(2+) is bound by residues Asp-489, Asp-491, and Asp-493.

Belongs to the RNA polymerase beta' chain family. RpoC1 subfamily. In terms of assembly, in plastids the minimal PEP RNA polymerase catalytic core is composed of four subunits: alpha, beta, beta', and beta''. When a (nuclear-encoded) sigma factor is associated with the core the holoenzyme is formed, which can initiate transcription. The cofactor is Mg(2+). It depends on Zn(2+) as a cofactor.

Its subcellular location is the plastid. It localises to the chloroplast. It catalyses the reaction RNA(n) + a ribonucleoside 5'-triphosphate = RNA(n+1) + diphosphate. In terms of biological role, DNA-dependent RNA polymerase catalyzes the transcription of DNA into RNA using the four ribonucleoside triphosphates as substrates. The sequence is that of DNA-directed RNA polymerase subunit beta' from Nicotiana sylvestris (Wood tobacco).